We begin with the raw amino-acid sequence, 346 residues long: Glycerol-1-phosphate dehydrogenase [NAD(P)+] (346 aa).

NAD(+) is bound by residues 93 to 97 (GSIID) and 115 to 118 (TTAS). Position 120 (D120) interacts with substrate. S124 is a binding site for NAD(+). D167 lines the substrate pocket. Zn(2+) contacts are provided by D167 and H247. H251 is a binding site for substrate. Zn(2+) is bound at residue H263.

It belongs to the glycerol-1-phosphate dehydrogenase family. The cofactor is Zn(2+).

It is found in the cytoplasm. The catalysed reaction is sn-glycerol 1-phosphate + NAD(+) = dihydroxyacetone phosphate + NADH + H(+). It catalyses the reaction sn-glycerol 1-phosphate + NADP(+) = dihydroxyacetone phosphate + NADPH + H(+). It functions in the pathway membrane lipid metabolism; glycerophospholipid metabolism. Functionally, catalyzes the NAD(P)H-dependent reduction of dihydroxyacetonephosphate (DHAP or glycerone phosphate) to glycerol 1-phosphate (G1P). The G1P thus generated is used as the glycerophosphate backbone of phospholipids in the cellular membranes of Archaea. The protein is Glycerol-1-phosphate dehydrogenase [NAD(P)+] of Pyrococcus abyssi (strain GE5 / Orsay).